The following is a 228-amino-acid chain: RNA chaperone ProQ (228 aa).

The segment at 105 to 178 (EAKARVQAQR…REEQHTPVSD (74 aa)) is disordered. Composition is skewed to basic and acidic residues over residues 117 to 136 (QQAK…DAPR) and 146 to 173 (RRKE…EEQH).

This sequence belongs to the ProQ family.

It is found in the cytoplasm. Functionally, RNA chaperone with significant RNA binding, RNA strand exchange and RNA duplexing activities. May regulate ProP activity through an RNA-based, post-transcriptional mechanism. The chain is RNA chaperone ProQ from Citrobacter koseri (strain ATCC BAA-895 / CDC 4225-83 / SGSC4696).